Consider the following 412-residue polypeptide: Tyrosine--tRNA ligase (412 aa).

A 'HIGH' region motif is present at residues 48–57 (PSRPDLHLGH). Residues 232–236 (KMSKS) carry the 'KMSKS' region motif. Lysine 235 lines the ATP pocket. The S4 RNA-binding domain maps to 342–405 (VGLLNLMRHA…GKRRFARIRP (64 aa)).

This sequence belongs to the class-I aminoacyl-tRNA synthetase family. TyrS type 2 subfamily. Homodimer.

It localises to the cytoplasm. The catalysed reaction is tRNA(Tyr) + L-tyrosine + ATP = L-tyrosyl-tRNA(Tyr) + AMP + diphosphate + H(+). Functionally, catalyzes the attachment of tyrosine to tRNA(Tyr) in a two-step reaction: tyrosine is first activated by ATP to form Tyr-AMP and then transferred to the acceptor end of tRNA(Tyr). The chain is Tyrosine--tRNA ligase from Salinibacter ruber (strain DSM 13855 / M31).